The primary structure comprises 291 residues: Transcription factor TYE7 (291 aa).

Residues 89 to 109 (FPTDQFFSNPSSYSHSPEVSS) are disordered. Residues 96–109 (SNPSSYSHSPEVSS) show a composition bias toward low complexity. The residue at position 104 (serine 104) is a Phosphoserine. Residues 180-265 (FQKQAHNKIE…EKAVDYILYL (86 aa)) enclose the bHLH domain. The DNA site is built by histidine 185, glutamate 189, and arginine 193. The tract at residues 221–245 (DSVKKQDEDGAETAATTPLPSAAAT) is disordered. Residues 233–245 (TAATTPLPSAAAT) show a composition bias toward low complexity. Threonine 237 is modified (phosphothreonine).

In terms of assembly, homodimer. Efficient DNA binding requires dimerization with another bHLH protein.

Its subcellular location is the nucleus. Functionally, transcriptional activator of glycolytic gene expression, such as enolase genes (ENO1 and ENO2), glyceraldehyde-3-phosphate dehydrogenase gene (TDH), phosphoglycerate kinase (PGK1), phosphoglycerate mutase (PGM1), pyruvate kinase (PYK1) and triosephosphate isomerase (TPI1) genes. Binds DNA on E-box motifs: 5'-CANNTG-3'. In response to adenylic nucleotide reduction, activates Ty1 mRNA transcription, possibly by controlling Ty1 antisense transcription. Acts as a cell cycle transcription factor. Its function may also be linked to sulfur metabolism and the cross-regulation between phosphate and sulfate metabolism. The protein is Transcription factor TYE7 of Saccharomyces cerevisiae (strain ATCC 204508 / S288c) (Baker's yeast).